The primary structure comprises 210 residues: MGQVFLLMPVLLVSCFLSQGAAIENQRLFNIAVSRVQHLHLLAQKMFNDFDGTLLPDERRQLNKIFLLDFCNSDSIVSPVDKHETQKSSVLKLLHISFRLIESWEYPSQTLIISNSLLVGNANQISEKLSDLKVGINLLIMGSQDGLLSLDDNDSQQLPRYGNYYQNPGGDGNVRRNYELLACFKKDMHKVETYLTVAKCRKSLEANCTL.

Positions 1 to 22 are cleaved as a signal peptide; that stretch reads MGQVFLLMPVLLVSCFLSQGAA. H38 serves as a coordination point for Zn(2+). Residues C71 and C183 are joined by a disulfide bond. Residue E192 participates in Zn(2+) binding. Residues C200 and C208 are joined by a disulfide bond.

The protein belongs to the somatotropin/prolactin family.

The protein resides in the secreted. Growth hormone plays an important role in growth control and is involved in the regulation of several anabolic processes. Implicated as an osmoregulatory substance important for seawater adaptation. In Oncorhynchus kisutch (Coho salmon), this protein is Somatotropin (gh).